Consider the following 335-residue polypeptide: GTPase Obg (335 aa).

The Obg domain occupies Met-1 to Leu-159. Positions Ala-160–Glu-328 constitute an OBG-type G domain. GTP-binding positions include Gly-166–Ser-173, Phe-191–Val-195, Asp-213–Gly-216, Asn-280–Asp-283, and Ser-309–Ala-311. Mg(2+) is bound by residues Ser-173 and Thr-193.

Belongs to the TRAFAC class OBG-HflX-like GTPase superfamily. OBG GTPase family. As to quaternary structure, monomer. Requires Mg(2+) as cofactor.

The protein localises to the cytoplasm. Functionally, an essential GTPase which binds GTP, GDP and possibly (p)ppGpp with moderate affinity, with high nucleotide exchange rates and a fairly low GTP hydrolysis rate. Plays a role in control of the cell cycle, stress response, ribosome biogenesis and in those bacteria that undergo differentiation, in morphogenesis control. This Gloeobacter violaceus (strain ATCC 29082 / PCC 7421) protein is GTPase Obg.